A 270-amino-acid polypeptide reads, in one-letter code: Bacterial microcompartment shell protein PduB (270 aa).

Positions L6–V18 are probable helix that binds cargo to the BMC shell. 2 consecutive BMC circularly permuted domains span residues E47 to F152 and D154 to L258.

This sequence belongs to the EutL/PduB family. In terms of assembly, homotrimerizes to form a pseudohexamer with a central pore. The trimers pack into an array. In terms of processing, in purified BMCs seen as a 28.0 kDa and 25.0 kDa form, both of which have been N-terminally sequenced and whose N-fMet is removed; the smaller form is called PduB'.

The protein resides in the bacterial microcompartment. The protein operates within polyol metabolism; 1,2-propanediol degradation. The two proteins produced are among the major shell proteins of the bacterial microcompartment (BMC) dedicated to 1,2-propanediol (1,2-PD) degradation. Required for structural integrity of BMCs and to mitigate propionaldehyde toxicity. The N-terminal 13 residues are important for correct assembly of the BMC shell. The isolated BMC shell component protein ratio for J:A:B':B:K:T:U is approximately 15:10:7:6:1:1:2. The N-terminus of the long form (PduB) is required for correct formation of BMCs, deletions in the first 37 residues have substantially reduced levels of the major lumen enzymes. May play a major role in binding the enzyme contents to the shell. Its function is as follows. The 1,2-PD-specific bacterial microcompartment (BMC) concentrates low levels of 1,2-PD catabolic enzymes, concentrates volatile reaction intermediates thus enhancing pathway flux and keeps the level of toxic, mutagenic propionaldehyde low. The protein is Bacterial microcompartment shell protein PduB of Salmonella typhimurium (strain LT2 / SGSC1412 / ATCC 700720).